The primary structure comprises 102 residues: MAKQKIRIRLKAYEHRILDQSADKIVETAKRTGATISGPIPLPTERTLYTVLRSPHKYKDSREQFEMRTHKRLIDIVNPTPKTVDALMKLDLPSGVDIEIKL.

The protein belongs to the universal ribosomal protein uS10 family. In terms of assembly, part of the 30S ribosomal subunit.

Functionally, involved in the binding of tRNA to the ribosomes. The protein is Small ribosomal subunit protein uS10 of Lacticaseibacillus casei (strain BL23) (Lactobacillus casei).